Consider the following 236-residue polypeptide: MHTLTLKRVLGFTIVILLLLALFIWGIGLETLKARQVDLLYLGQRHLMLVFTSMFFALLVGIPSGILLSRPAAKGFAEYVMQIFNVGNTLPPLAVLALAMVIIGIGDTPAIVALFLASLLPIVRNTYAGLCSVPASLIEAANGIGMTKWQRLRQVELPNAWPVMLSGIRIATAINVGTAPLAFLIGASSYGELIFPGIYLNDFPTLILGATATALFALILDTLLAWFGRRLSPHTV.

6 helical membrane-spanning segments follow: residues Val9–Leu29, Leu47–Leu67, Val95–Phe115, Thr126–Met146, Pro180–Leu200, and Ile207–Phe227. The ABC transmembrane type-1 domain occupies Gly43–Leu224.

This sequence belongs to the binding-protein-dependent transport system permease family. In terms of assembly, the complex is composed of two ATP-binding proteins (OsmV), two transmembrane proteins (OsmW and OsmY) and a solute-binding protein (OsmX).

It is found in the cell inner membrane. In terms of biological role, part of the OsmU ABC transporter complex, which is involved in the uptake of osmoprotectants such as choline-O-sulfate and glycine betaine. Probably responsible for the translocation of the substrate across the membrane. This is Osmoprotectant import permease protein OsmY (osmY) from Salmonella typhimurium (strain LT2 / SGSC1412 / ATCC 700720).